The primary structure comprises 283 residues: Extensin (283 aa).

Residues 1-24 (MMGGKAALLLALVAVTLAVVEIQA) form the signal peptide. A disordered region spans residues 27-283 (GYGYGGGYPT…PPPPPPPPYY (257 aa)). The span at 36–45 (TPTPKPPAKG) shows a compositional bias: pro residues. Over residues 46–69 (PKPEKPPTKGHGHKPEKPPKEHKP) the composition is skewed to basic and acidic residues. Composition is skewed to pro residues over residues 70–264 (TPPT…PTYT) and 272–283 (SSPPPPPPPPYY).

In terms of processing, hydroxylated on proline residues in the S-P-P-P-P repeat. O-glycosylated on hydroxyprolines.

The protein localises to the secreted. It is found in the primary cell wall. Its function is as follows. Structural component in primary cell wall. In Sorghum bicolor (Sorghum), this protein is Extensin (HRGP).